Here is a 193-residue protein sequence, read N- to C-terminus: Putative RNA methyltransferase At5g10620 (193 aa).

S-adenosyl-L-methionine is bound by residues leucine 110, glycine 142, and leucine 161–leucine 166.

Belongs to the RNA methyltransferase RlmH family.

In Arabidopsis thaliana (Mouse-ear cress), this protein is Putative RNA methyltransferase At5g10620.